The chain runs to 344 residues: Aspartate carbamoyltransferase catalytic subunit (344 aa).

A disordered region spans residues 1-30 (MPESPPLPKRSPLMTSSTTRPASDYPPGGD). Carbamoyl phosphate-binding residues include Arg-88 and Thr-89. Lys-116 contributes to the L-aspartate binding site. Arg-138, His-166, and Gln-169 together coordinate carbamoyl phosphate. Positions 199 and 253 each coordinate L-aspartate. 2 residues coordinate carbamoyl phosphate: Gly-294 and Pro-295.

The protein belongs to the aspartate/ornithine carbamoyltransferase superfamily. ATCase family. In terms of assembly, heterododecamer (2C3:3R2) of six catalytic PyrB chains organized as two trimers (C3), and six regulatory PyrI chains organized as three dimers (R2).

It catalyses the reaction carbamoyl phosphate + L-aspartate = N-carbamoyl-L-aspartate + phosphate + H(+). Its pathway is pyrimidine metabolism; UMP biosynthesis via de novo pathway; (S)-dihydroorotate from bicarbonate: step 2/3. Catalyzes the condensation of carbamoyl phosphate and aspartate to form carbamoyl aspartate and inorganic phosphate, the committed step in the de novo pyrimidine nucleotide biosynthesis pathway. The protein is Aspartate carbamoyltransferase catalytic subunit of Sphingopyxis alaskensis (strain DSM 13593 / LMG 18877 / RB2256) (Sphingomonas alaskensis).